A 256-amino-acid chain; its full sequence is 5-keto-4-deoxy-D-glucarate aldolase (256 aa).

Histidine 50 (proton acceptor) is an active-site residue. Glutamine 151 is a substrate binding site. Glutamate 153 is a binding site for Mg(2+). The substrate site is built by serine 178 and aspartate 179. Position 179 (aspartate 179) interacts with Mg(2+).

The protein belongs to the HpcH/HpaI aldolase family. KDGluc aldolase subfamily. Homohexamer; trimer of dimers. Requires Mg(2+) as cofactor.

It catalyses the reaction 5-dehydro-4-deoxy-D-glucarate = 2-hydroxy-3-oxopropanoate + pyruvate. The enzyme catalyses 2-dehydro-3-deoxy-D-glucarate = 2-hydroxy-3-oxopropanoate + pyruvate. It functions in the pathway carbohydrate acid metabolism; galactarate degradation; D-glycerate from galactarate: step 2/3. Catalyzes the reversible retro-aldol cleavage of both 5-keto-4-deoxy-D-glucarate and 2-keto-3-deoxy-D-glucarate to pyruvate and tartronic semialdehyde. The sequence is that of 5-keto-4-deoxy-D-glucarate aldolase from Salmonella paratyphi A (strain ATCC 9150 / SARB42).